The sequence spans 366 residues: Spore germination protein GerM (366 aa).

Disordered stretches follow at residues 42–72 (TFVN…KADQ) and 346–366 (EKGE…TGSF). Positions 58–69 (KKTESEKSDTAK) are enriched in basic and acidic residues. Positions 357–366 (RPSQVNTGSF) are enriched in polar residues.

In terms of biological role, unknown. Affects both sporulation and germination. The chain is Spore germination protein GerM (gerM) from Bacillus subtilis (strain 168).